The chain runs to 475 residues: MHFETVIGLEVHVELKTDSKMFSPSPAHFGAEPNSNTNVIDLAYPGVLPVVNKRAVDWAMRAAMALNMEIATESKFDRKNYFYPDNPKAYQISQFDQPIGENGYIDIEVDGETKRIGITRLHMEEDAGKSTHKGEYSLVDLNRQGTPLIEIVSEPDIRSPKEAYAYLEKLRSIIQYTGVSDVKMEEGSLRCDANISLRPYGQEKFGTKAELKNLNSFNYVRKGLEYEEKRQEEELLSGGEIGQETRRFDESTGKTILMRVKEGSDDYRYFPEPDIVPLYIDDAWKERVRQTIPELPDERKAKYVNELGLPAYDAHVLTLTKEMSDFFESTIEHGADVKLTSNWLMGGVNEYLNKNQVELLDTKLTPENLAGMIKLIEDGTMSSKIAKKVFPELAAKGGNAKQIMEDNGLVQISDEATLLKFVNEALDNNEQSVEDYKNGKGKAMGFLVGQIMKASKGQANPQLVNQLLKQELDKR.

Belongs to the GatB/GatE family. GatB subfamily. In terms of assembly, heterotrimer of A, B and C subunits.

The enzyme catalyses L-glutamyl-tRNA(Gln) + L-glutamine + ATP + H2O = L-glutaminyl-tRNA(Gln) + L-glutamate + ADP + phosphate + H(+). It catalyses the reaction L-aspartyl-tRNA(Asn) + L-glutamine + ATP + H2O = L-asparaginyl-tRNA(Asn) + L-glutamate + ADP + phosphate + 2 H(+). In terms of biological role, allows the formation of correctly charged Asn-tRNA(Asn) or Gln-tRNA(Gln) through the transamidation of misacylated Asp-tRNA(Asn) or Glu-tRNA(Gln) in organisms which lack either or both of asparaginyl-tRNA or glutaminyl-tRNA synthetases. The reaction takes place in the presence of glutamine and ATP through an activated phospho-Asp-tRNA(Asn) or phospho-Glu-tRNA(Gln). This Staphylococcus aureus (strain MRSA252) protein is Aspartyl/glutamyl-tRNA(Asn/Gln) amidotransferase subunit B.